We begin with the raw amino-acid sequence, 359 residues long: Acyl-CoA Delta-9 desaturase (359 aa).

Helical transmembrane passes span 51 to 71 and 74 to 94; these read VILFIYLHLAALYGAYLAFTS and IATTIFAIILYQVSGVGITGG. Residues histidine 96, histidine 101, histidine 133, histidine 136, and histidine 137 each coordinate Fe cation. A Histidine box-1 motif is present at residues 96–101; that stretch reads HRLWAH. Residues 133 to 137 carry the Histidine box-2 motif; the sequence is HRVHH. The next 2 membrane-spanning stretches (helical) occupy residues 194–214 and 222–244; these read YLILMPIVCFLIPTTIPVYMW and WFVATLFRYTFTLNMTWLVNSAA. The Fe cation site is built by histidine 245, histidine 274, histidine 277, and histidine 278. Residues 274–278 carry the Histidine box-3 motif; sequence HNYHH.

This sequence belongs to the fatty acid desaturase type 1 family. Requires Fe(2+) as cofactor.

It is found in the membrane. The catalysed reaction is octadecanoyl-CoA + 2 Fe(II)-[cytochrome b5] + O2 + 2 H(+) = (9Z)-octadecenoyl-CoA + 2 Fe(III)-[cytochrome b5] + 2 H2O. The enzyme catalyses hexadecanoyl-CoA + 2 Fe(II)-[cytochrome b5] + O2 + 2 H(+) = (9Z)-hexadecenoyl-CoA + 2 Fe(III)-[cytochrome b5] + 2 H2O. In terms of biological role, catalyzes the formation of a Delta9 double bond, acting on saturated fatty acyl substrates like palmitoyl-CoA (hexadecanoyl-CoA) and stearoyl-CoA (octadecanoyl-CoA) with higher desaturation activity on octadecanoyl-CoA than hexadecanoyl-CoA. The protein is Acyl-CoA Delta-9 desaturase of Acheta domesticus (House cricket).